Consider the following 329-residue polypeptide: Acetyl-coenzyme A carboxylase carboxyl transferase subunit alpha (329 aa).

Residues Gln-40–Glu-294 enclose the CoA carboxyltransferase C-terminal domain.

This sequence belongs to the AccA family. As to quaternary structure, acetyl-CoA carboxylase is a heterohexamer composed of biotin carboxyl carrier protein (AccB), biotin carboxylase (AccC) and two subunits each of ACCase subunit alpha (AccA) and ACCase subunit beta (AccD).

The protein resides in the cytoplasm. The catalysed reaction is N(6)-carboxybiotinyl-L-lysyl-[protein] + acetyl-CoA = N(6)-biotinyl-L-lysyl-[protein] + malonyl-CoA. It participates in lipid metabolism; malonyl-CoA biosynthesis; malonyl-CoA from acetyl-CoA: step 1/1. Component of the acetyl coenzyme A carboxylase (ACC) complex. First, biotin carboxylase catalyzes the carboxylation of biotin on its carrier protein (BCCP) and then the CO(2) group is transferred by the carboxyltransferase to acetyl-CoA to form malonyl-CoA. In Prochlorococcus marinus (strain SARG / CCMP1375 / SS120), this protein is Acetyl-coenzyme A carboxylase carboxyl transferase subunit alpha.